The chain runs to 1363 residues: MEPYSLGEEGALPSEGHLPSFSESQVLNCSDTLNRDLGPSTRDLLYAGLSGLDLDPSLSTSDMPSEVLEDNLDTLSLYSGKDSDSVKLLEEYADSESQTSLQDLGLGALKVPKEADEGGRATGSTRKGKRQHSSPQNPLLDCSLCGKVFSSASSLSKHYLTHSQERKHVCKVCSKAFKRQDHLTGHMLTHQKTKPFVCIEQGCSKSYCDYRSLRRHYEVQHGVCILKETPPEEEAYGDPTHNHDVANQPPPSGLRSLGPPEARSPGSVLPNRDLLRCIVSSIVHQKIPSPGPAVGPSDTEARSSACACPTSLGSSSCTPASTPVALGTLGSEIPEETHPPRKEAATEVFTPVQSRAAENGVPDPPESELESESPRLQRPSSLEGWPEGSSLPACLPLFRGHSVPSGSQPSSHNFQWLRNLPGCPKNKGSNVFMVHKPPAVASREGSEGGGSGPSSTPTSVEPSPSLGTTQEELLPFPPALLKAPGEASSEVRQAAGEDETWAPKKCKPDCESFPWQSPTELGLQDAQNPGGLPSDATPLFRQLFMKSQESLVSHEQMQVLQMIAKSQRIFSHTQVATASAQRPGPEGKQSTLKPLQGPWPPQTLPPAPTVDSFQIGPGHSEPEGSPVRRRKTMPAVSRETSPGGPRRDTKGGPKVASAPPSLTGPGLLPSRNPDSSSLAKGTLDLGDIIPNAGSRQSQLGGDEPAGTQLVGKQGQGENGLASGAMRGEKGPACPRGGGYRLFSGHPRAQRFSGFRKEKVKMDVCCAASPSQVAMASFSSAGPLADPPRDMKSKLTIFNRIQGGNIYRLPHPVKEESLAGGCHQPNGGPTDWMESKSTFVCKNCSQMFYTEKGLSSHMCFHSDQWPSPRGKQEQQVKGQMVASVKRKAGREEGAVEDMKRHYDCSSSEPQDVTILSMLVSSGSCGVTPVVLSSLLQGQEKDGEERDSKESCQYRKRKKRPQPKALFAPPAPSALGEPGPGGCHQSCLHSPVFLVDHLLKGLFQCSPYTPPPMLSPIREGSGLYFNTLCSTSRAGPHLISPVLDQVDSSFGICVVKDDTKISIEPHINVGSRFQAEIPELQERLLARVDENVASLVWKPWGDVMTNPETQDRVMELCNVACSSVMPGGGTNLELALHCLHDAQGSVQVALETLLLRGPQKPRTHPLADYRYTGSDIWTPMEKRLFKKAFCAHKKDFYLIHKMIQTKSVAQCVEYYYIWKKMVKFDCGRAPGLEKRGRRELDEVERTEDKVTCSPRERPTHRPTPELKIKTKSYRRESILHSSPSAAPKRTPEPPGSVESQGVFPCRECERVFDKIKSRNAHMKRHRLQEHVEPVRVKWPVKPYPLKEEEEEEEEELGADMGPLQW.

Disordered regions lie at residues 1–23 (MEPY…SFSE) and 106–137 (LGAL…SPQN). 3 C2H2-type zinc fingers span residues 140-162 (LDCS…YLTH), 168-190 (HVCK…MLTH), and 196-221 (FVCI…EVQH). Disordered stretches follow at residues 232–269 (EEEA…GSVL), 286–387 (KIPS…GWPE), 440–532 (VASR…PGGL), and 574–741 (QVAT…GYRL). The segment covering 311-321 (SLGSSSCTPAS) has biased composition (polar residues). Residues 335–345 (EETHPPRKEAA) show a composition bias toward basic and acidic residues. Residues 453-465 (PSSTPTSVEPSPS) are compositionally biased toward low complexity. Positions 597-608 (GPWPPQTLPPAP) are enriched in pro residues. The span at 659–670 (PPSLTGPGLLPS) shows a compositional bias: low complexity. Residues 838–860 (FVCKNCSQMFYTEKGLSSHMCFH) form a C2H2-type 4 zinc finger. The tract at residues 935–978 (QGQEKDGEERDSKESCQYRKRKKRPQPKALFAPPAPSALGEPGP) is disordered. Residues 937 to 951 (QEKDGEERDSKESCQ) show a composition bias toward basic and acidic residues. The ELM2 domain maps to 1063–1155 (PHINVGSRFQ…VALETLLLRG (93 aa)). Positions 1170-1221 (TGSDIWTPMEKRLFKKAFCAHKKDFYLIHKMIQTKSVAQCVEYYYIWKKMVK) constitute an SANT domain. The disordered stretch occupies residues 1243–1298 (RTEDKVTCSPRERPTHRPTPELKIKTKSYRRESILHSSPSAAPKRTPEPPGSVESQ). Residues 1244–1276 (TEDKVTCSPRERPTHRPTPELKIKTKSYRRESI) are compositionally biased toward basic and acidic residues. The C2H2-type 5 zinc finger occupies 1301 to 1323 (FPCRECERVFDKIKSRNAHMKRH). Positions 1343–1363 (LKEEEEEEEEELGADMGPLQW) are disordered. Over residues 1345–1355 (EEEEEEEEELG) the composition is skewed to acidic residues.

Interacts with DNTTIP1. Identified in a complex with KCTD19, HDAC1 and HSPA2. Identified in a complex with HDAC1, HDAC2, DNTTIP1 and KCTD19. Identified in a complex with KCTD19 and HDAC1. Germ-cell-specific. Specifically present in testicular spermatogenic cells, but not in testicular and mature sperm. During spermatogenesis, it is present in spermatocytes and round spermatids only (at protein level).

The protein resides in the nucleus. Transcription regulator which is essential for male fertility and for the completion of meiotic prophase in spermatocytes. Regulates progression of the pachytene stage of meiotic prophase by activating the expression of genes involved in meiosis and post-meiosis during spermatogenesis. Maintains the repression of pre-pachytene transcriptional programs, including meiotic double-strand breaks (DSB) formation genes in pachytene spermatocytes and suppresses aberrant DSB formation after mid-pachytene, thus ensuring meiosis progression. The chain is Zinc finger protein 541 (Znf541) from Mus musculus (Mouse).